A 106-amino-acid polypeptide reads, in one-letter code: UPF0145 protein Pput_2816 (106 aa).

Belongs to the UPF0145 family.

The protein is UPF0145 protein Pput_2816 of Pseudomonas putida (strain ATCC 700007 / DSM 6899 / JCM 31910 / BCRC 17059 / LMG 24140 / F1).